Reading from the N-terminus, the 420-residue chain is Glucose-1-phosphate adenylyltransferase (420 aa).

Residues Tyr107, Gly173, 188 to 189 (EK), and Ser206 contribute to the alpha-D-glucose 1-phosphate site.

Belongs to the bacterial/plant glucose-1-phosphate adenylyltransferase family. Homotetramer.

It carries out the reaction alpha-D-glucose 1-phosphate + ATP + H(+) = ADP-alpha-D-glucose + diphosphate. It functions in the pathway glycan biosynthesis; glycogen biosynthesis. Its function is as follows. Involved in the biosynthesis of ADP-glucose, a building block required for the elongation reactions to produce glycogen. Catalyzes the reaction between ATP and alpha-D-glucose 1-phosphate (G1P) to produce pyrophosphate and ADP-Glc. This chain is Glucose-1-phosphate adenylyltransferase, found in Shewanella baltica (strain OS155 / ATCC BAA-1091).